Here is a 220-residue protein sequence, read N- to C-terminus: Pyridoxine/pyridoxamine 5'-phosphate oxidase (220 aa).

Residues 13 to 16 (RVEY) and lysine 77 contribute to the substrate site. FMN contacts are provided by residues 72–77 (RTVLCK), 87–88 (FT), lysine 94, and glutamine 116. Substrate is bound by residues tyrosine 134, arginine 138, and serine 142. FMN-binding positions include 151-152 (QS) and tryptophan 197. Residue 203–205 (RVH) participates in substrate binding. Arginine 207 is a binding site for FMN.

It belongs to the pyridoxamine 5'-phosphate oxidase family. As to quaternary structure, homodimer. It depends on FMN as a cofactor.

It catalyses the reaction pyridoxamine 5'-phosphate + O2 + H2O = pyridoxal 5'-phosphate + H2O2 + NH4(+). The catalysed reaction is pyridoxine 5'-phosphate + O2 = pyridoxal 5'-phosphate + H2O2. It participates in cofactor metabolism; pyridoxal 5'-phosphate salvage; pyridoxal 5'-phosphate from pyridoxamine 5'-phosphate: step 1/1. It functions in the pathway cofactor metabolism; pyridoxal 5'-phosphate salvage; pyridoxal 5'-phosphate from pyridoxine 5'-phosphate: step 1/1. Functionally, catalyzes the oxidation of either pyridoxine 5'-phosphate (PNP) or pyridoxamine 5'-phosphate (PMP) into pyridoxal 5'-phosphate (PLP). The chain is Pyridoxine/pyridoxamine 5'-phosphate oxidase from Mycobacterium sp. (strain KMS).